The chain runs to 485 residues: Katanin p60 ATPase-containing subunit A1 (485 aa).

The tract at residues H101–E173 is disordered. Over residues N141–E173 the composition is skewed to basic and acidic residues. G244–T251 lines the ATP pocket.

It belongs to the AAA ATPase family. Katanin p60 subunit A1 subfamily. In terms of assembly, can homooligomerize into hexameric rings, which may be promoted by interaction with microtubules. Interacts with katnb1, which may serve as a targeting subunit.

The protein resides in the cytoplasm. It localises to the cytoskeleton. Its subcellular location is the microtubule organizing center. The protein localises to the centrosome. It is found in the spindle pole. The protein resides in the spindle. It catalyses the reaction n ATP + n H2O + a microtubule = n ADP + n phosphate + (n+1) alpha/beta tubulin heterodimers.. With respect to regulation, ATPase activity is stimulated by microtubules, which promote homooligomerization. ATP-dependent microtubule severing is stimulated by interaction with katnb1. Its function is as follows. Catalytic subunit of a complex which severs microtubules in an ATP-dependent manner. Microtubule severing may promote rapid reorganization of cellular microtubule arrays and the release of microtubules from the centrosome following nucleation. This chain is Katanin p60 ATPase-containing subunit A1 (katna1), found in Danio rerio (Zebrafish).